We begin with the raw amino-acid sequence, 447 residues long: MEPGPCSRPAEPGHCVSGPAGAGSAFPESPLSVAGAEPGNRPGTVAAVLPAGGCGERMGVRTPKQFCRVLERPLISYTLQAMERVCWIKDIVVTVTGENMEAMRSIIQRYGHKRISLAEAGATRHRSIFNGLKALAEDQPDCKLTKPEVVIIHDAVRPFVEEDILLRVVLAAKEHGAAGAIRPLVSTVISPSADGHLDHSLDRAKHRASEMPQAFLFDVIYEAYQQCSDFDLEFGTECLQLALKYCHRKAKLVEGPPALWKVTYKQDLCAAEAMIKEKISQEICVVMNTKDEESVGHLLEEALRKELNCMKITSTVMDHIGGDIRNFIEQCYSFICVNVVSPDSQETRKLLRILEESSLPLLYPVVVVLVHCFDFTSVPLAQKMESLVWIRGLAKEVKERNILLSGLLLNYSQDEQKLQESLGQSAAIIAALVKERNSALVGQLLVA.

The protein belongs to the IspD/TarI cytidylyltransferase family. IspD subfamily. In terms of assembly, homodimer.

The protein localises to the cytoplasm. Its subcellular location is the cytosol. It catalyses the reaction D-ribitol 5-phosphate + CTP + H(+) = CDP-L-ribitol + diphosphate. The enzyme catalyses D-ribose 5-phosphate + CTP + H(+) = CDP-D-ribose + diphosphate. The catalysed reaction is D-ribulose 5-phosphate + CTP + H(+) = CDP-D-ribulose + diphosphate. It functions in the pathway protein modification; protein glycosylation. Cytidylyltransferase required for protein O-linked mannosylation. Catalyzes the formation of CDP-ribitol nucleotide sugar from D-ribitol 5-phosphate. CDP-ribitol is a substrate of FKTN during the biosynthesis of the phosphorylated O-mannosyl trisaccharide (N-acetylgalactosamine-beta-3-N-acetylglucosamine-beta-4-(phosphate-6-)mannose), a carbohydrate structure present in alpha-dystroglycan (DAG1), which is required for binding laminin G-like domain-containing extracellular proteins with high affinity. Shows activity toward other pentose phosphate sugars and mediates formation of CDP-ribulose or CDP-ribose using CTP and ribulose-5-phosphate or ribose-5-phosphate, respectively. Not involved in dolichol production. This is D-ribitol-5-phosphate cytidylyltransferase (Crppa) from Mus musculus (Mouse).